The following is a 419-amino-acid chain: Lipid II:glycine glycyltransferase (419 aa).

Belongs to the FemABX family.

The protein localises to the cytoplasm. It catalyses the reaction beta-D-GlcNAc-(1-&gt;4)-Mur2Ac(oyl-L-Ala-D-isoglutaminyl-L-Lys-D-Ala-D-Ala)-di-trans,octa-cis-undecaprenyl diphosphate + glycyl-tRNA(Gly) = beta-D-GlcNAc-(1-&gt;4)-Mur2Ac(oyl-L-Ala-D-isoglutaminyl-L-Lys-(N(6)-Gly)-D-Ala-D-Ala)-di-trans,octa-cis-undecaprenyl diphosphate + tRNA(Gly) + H(+). Its function is as follows. Catalyzes the incorporation of amino acid(s) into the interchain peptide bridge of peptidoglycan, using aminoacyl-tRNA as amino acid donor. The polypeptide is Lipid II:glycine glycyltransferase (femX) (Staphylococcus haemolyticus (strain JCSC1435)).